A 188-amino-acid chain; its full sequence is MGVNIRHNKDRKVWRKEPKSQDIYLRLLVKLYRFLARRTNSTFNQVVLKRLFLSRTNWPPLSLSRMIRKMKLPGQENKTPVVVGTITDDVRVQEVPKLKVCALHVTSRACSRILKAGGKILTFDQLALDSPKGRGTGLLSGPRKGREVYRHFGKAPRTPHSHTKPYVRSKGRKFERARGRWASRGYKN.

K119 is covalently cross-linked (Glycyl lysine isopeptide (Lys-Gly) (interchain with G-Cter in SUMO2)). At S130 the chain carries Phosphoserine. The segment at R150–N188 is disordered. Composition is skewed to basic residues over residues H151–G171 and G179–N188. The residue at position 158 (T158) is a Phosphothreonine. A Glycyl lysine isopeptide (Lys-Gly) (interchain with G-Cter in SUMO2) cross-link involves residue K164.

It belongs to the eukaryotic ribosomal protein eL18 family. Component of the large ribosomal subunit.

Its subcellular location is the cytoplasm. It is found in the cytosol. It localises to the rough endoplasmic reticulum. Functionally, component of the large ribosomal subunit. The ribosome is a large ribonucleoprotein complex responsible for the synthesis of proteins in the cell. This is Large ribosomal subunit protein eL18 (RPL18) from Oryctolagus cuniculus (Rabbit).